The sequence spans 91 residues: Potassium channel toxin MeuTXK-beta-1 (91 aa).

Positions 1–19 are cleaved as a signal peptide; that stretch reads MQRNLVVLLFLGMVALSSC. One can recognise a BetaSPN-type CS-alpha/beta domain in the interval 54 to 91; sequence QFGCPAYQGYCDDHCQDIEKKEGFCHGFKCKCGIPMGF. 3 disulfides stabilise this stretch: C57/C78, C64/C83, and C68/C85.

As to expression, expressed by the venom gland.

It localises to the secreted. Functionally, has a low affinity binding to potassium channels of rat brain synaptosomes. Displays weak antibacterial activity against Stenotrophomonas sp. Strongly inhibits the development of the Plasmodium berghei ookinetes. Displays slight hemolytic effect on mouse erythrocytes. Induces cytolysis on Xenopus oocytes at high concentrations. Is not toxic towards mice and towards the insect Tenebrio molitor. The protein is Potassium channel toxin MeuTXK-beta-1 of Mesobuthus eupeus (Lesser Asian scorpion).